The primary structure comprises 168 residues: Photosystem I assembly protein Ycf3 (168 aa).

3 TPR repeats span residues 35-68, 72-105, and 120-153; these read AFTY…EIDP, SYIL…NPFL, and GEQA…TPGN.

The protein belongs to the Ycf3 family.

It is found in the plastid. The protein localises to the chloroplast thylakoid membrane. In terms of biological role, essential for the assembly of the photosystem I (PSI) complex. May act as a chaperone-like factor to guide the assembly of the PSI subunits. This Panax ginseng (Korean ginseng) protein is Photosystem I assembly protein Ycf3.